Consider the following 571-residue polypeptide: Protein EARLY STARVATION 1, chloroplastic (571 aa).

Disordered stretches follow at residues 142–162 (RHSS…KDAG) and 215–254 (GSYR…TEHD). Residues 145–155 (SCSSQSLPQQQ) show a composition bias toward low complexity.

Belongs to the ESV1 family.

Its subcellular location is the plastid. It is found in the chloroplast stroma. Its function is as follows. Binds preferentially to highly ordered alpha-glucans, such as starch and crystalline maltodextrins. Involved in the organization of the starch granule matrix, thus influencing starch turnover by modulating the accessibility of starch polymers to modifying and degrading enzymes. Required for the control of starch degradation in leaves and starch distribution in nonphotosynthetic parts. Promotes gravitropic responses, negative in shoots but positive in roots, by facilitating starch granules (statoliths) formation in hypocotyls and roots columella. This is Protein EARLY STARVATION 1, chloroplastic from Marchantia polymorpha (Common liverwort).